We begin with the raw amino-acid sequence, 49 residues long: Large ribosomal subunit protein bL33B (49 aa).

Belongs to the bacterial ribosomal protein bL33 family.

The polypeptide is Large ribosomal subunit protein bL33B (Lactobacillus helveticus (strain DPC 4571)).